We begin with the raw amino-acid sequence, 600 residues long: UvrABC system protein C (600 aa).

Positions 15–100 (NSAGVYQYFN…IKQLHPKYNI (86 aa)) constitute a GIY-YIG domain. One can recognise a UVR domain in the interval 203-238 (SILIKNLEKQMLVLAQNENYEEAAKVRDQIVTIKDL).

It belongs to the UvrC family. In terms of assembly, interacts with UvrB in an incision complex.

It is found in the cytoplasm. In terms of biological role, the UvrABC repair system catalyzes the recognition and processing of DNA lesions. UvrC both incises the 5' and 3' sides of the lesion. The N-terminal half is responsible for the 3' incision and the C-terminal half is responsible for the 5' incision. This is UvrABC system protein C from Campylobacter jejuni subsp. jejuni serotype O:23/36 (strain 81-176).